A 218-amino-acid chain; its full sequence is Uracil-DNA glycosylase (218 aa).

D68 functions as the Proton acceptor in the catalytic mechanism.

The protein belongs to the uracil-DNA glycosylase (UDG) superfamily. UNG family. In terms of assembly, homodimer. Interacts with protein OPG148. Component of the Uracil-DNA glycosylase(UDG)-OPG148-polymerase complex; OPG148 and UDG form a heterodimeric processivity factor that associates with OPG71 to form the processive polymerase holoenzyme.

The enzyme catalyses Hydrolyzes single-stranded DNA or mismatched double-stranded DNA and polynucleotides, releasing free uracil.. Plays an essential role in viral replication as a component of the DNA polymerase processivity factor. Excises uracil residues from the DNA which can arise as a result of misincorporation of dUMP residues by DNA polymerase or due to deamination of cytosine. The chain is Uracil-DNA glycosylase (OPG116) from Bos taurus (Bovine).